Reading from the N-terminus, the 356-residue chain is Trans-enoyl reductase pgmF (356 aa).

Residues Val-57–Lys-60, Ser-175–Cys-178, Ser-198–Asn-201, Tyr-216, Val-261–Gly-262, and Ala-342–Lys-343 contribute to the NADP(+) site.

Belongs to the zinc-containing alcohol dehydrogenase family.

Functionally, FAD-linked oxidoreductase; part of the gene cluster that mediates the biosynthesis of pleosporalin A, ascomycone A, as well as a third cryptic naphthoquinone derived pigment, all responsible for the coloration of conidia. The pathway begins with the biosynthesis of the cyclized heptaketide 3-acetonyl-1,6,8-trihydroxy-2-naphthaldehyde by the NR-PKS pgmA. The C-6 hydroxyl group is further methylated by the O-methyltransferase pgmB to yield fusarubinaldehyde which is in turn oxidized by the cytochrome P450 monooxygenase pgmC at C-9. The C-1 hydroxyl group is then methylated spontaneously. Although pgmE, pgmD and pgmH are essential for the production of pleosporalin A, it is not the case for the 2 other final products and it remains difficult to assign a specific function to each enzyme. PgmF and pgmG seem not to be involved in pigment biosynthesis although they were regulated by the cluster-specific transcription factor pgmR. This Aspergillus terreus (strain NIH 2624 / FGSC A1156) protein is Trans-enoyl reductase pgmF.